The sequence spans 115 residues: uncharacterized protein (115 aa).

This is an uncharacterized protein from Dictyostelium discoideum (Social amoeba).